Consider the following 405-residue polypeptide: Chorismate synthase (405 aa).

NADP(+) contacts are provided by Arg-43 and Arg-49. FMN is bound by residues 138 to 140 (RAS) and 259 to 260 (QA). A compositionally biased stretch (basic and acidic residues) spans 275–286 (RRGSQAHDEMRP). Residues 275–308 (RRGSQAHDEMRPGPDGVLRSTNRAGGLEGGMTNG) form a disordered region. FMN contacts are provided by residues Gly-303, 318–322 (KPIST), and Arg-344.

Belongs to the chorismate synthase family. As to quaternary structure, homotetramer. FMNH2 serves as cofactor.

It carries out the reaction 5-O-(1-carboxyvinyl)-3-phosphoshikimate = chorismate + phosphate. It functions in the pathway metabolic intermediate biosynthesis; chorismate biosynthesis; chorismate from D-erythrose 4-phosphate and phosphoenolpyruvate: step 7/7. In terms of biological role, catalyzes the anti-1,4-elimination of the C-3 phosphate and the C-6 proR hydrogen from 5-enolpyruvylshikimate-3-phosphate (EPSP) to yield chorismate, which is the branch point compound that serves as the starting substrate for the three terminal pathways of aromatic amino acid biosynthesis. This reaction introduces a second double bond into the aromatic ring system. This is Chorismate synthase from Nocardia farcinica (strain IFM 10152).